We begin with the raw amino-acid sequence, 367 residues long: Glutamate 5-kinase (367 aa).

Position 10 (Lys10) interacts with ATP. Substrate-binding residues include Ser50, Asp137, and Asn149. ATP is bound by residues 169–170 (TD) and 211–217 (TGGMGTK). The region spanning 275-353 (AGEITVDEGA…QQIDAILGYE (79 aa)) is the PUA domain.

It belongs to the glutamate 5-kinase family.

The protein localises to the cytoplasm. It carries out the reaction L-glutamate + ATP = L-glutamyl 5-phosphate + ADP. Its pathway is amino-acid biosynthesis; L-proline biosynthesis; L-glutamate 5-semialdehyde from L-glutamate: step 1/2. Catalyzes the transfer of a phosphate group to glutamate to form L-glutamate 5-phosphate. The sequence is that of Glutamate 5-kinase from Cronobacter sakazakii (strain ATCC BAA-894) (Enterobacter sakazakii).